A 226-amino-acid polypeptide reads, in one-letter code: MSVLVVTGTGTGIGKTVATAALACHARLHGIDVAVCKPVQTGTRDGDDDLAEVARLAGVTELHSLARFPEPLAPLAAARRSGAELPTRAQILDLITAADRPGRLTLVEGAGGLLVEIASDGSTLRDVAADLGAPVLTVVAPGLGTLNHTVLTLEALAHRQISSAGLVIGAWPAQPGVAEIDNRDALSRLAPVRAALPAGAGSLGRADFERLSVDAFDPSWVEGLAA.

12–17 (GIGKTV) contacts ATP. Position 16 (threonine 16) interacts with Mg(2+). The active site involves lysine 37. Residue threonine 41 coordinates substrate. Residues aspartate 49, 108 to 111 (EGAG), and 197 to 199 (PAG) each bind ATP. Residues aspartate 49 and glutamate 108 each contribute to the Mg(2+) site.

Belongs to the dethiobiotin synthetase family. In terms of assembly, homodimer. Requires Mg(2+) as cofactor.

The protein localises to the cytoplasm. It carries out the reaction (7R,8S)-7,8-diammoniononanoate + CO2 + ATP = (4R,5S)-dethiobiotin + ADP + phosphate + 3 H(+). The protein operates within cofactor biosynthesis; biotin biosynthesis; biotin from 7,8-diaminononanoate: step 1/2. Catalyzes a mechanistically unusual reaction, the ATP-dependent insertion of CO2 between the N7 and N8 nitrogen atoms of 7,8-diaminopelargonic acid (DAPA, also called 7,8-diammoniononanoate) to form a ureido ring. This is ATP-dependent dethiobiotin synthetase BioD from Mycolicibacterium vanbaalenii (strain DSM 7251 / JCM 13017 / BCRC 16820 / KCTC 9966 / NRRL B-24157 / PYR-1) (Mycobacterium vanbaalenii).